Consider the following 355-residue polypeptide: MGCRQSSEEKEAARRSRRIDRHLRSESQRQRREIKLLLLGTSNSGKSTIVKQMKIIHSGGFNLDACKEYKPLIIYNAIDSLTRIIRALAALKIDFHNPDRAYDAVQLFALTGPAESKGEITPELLGVMRRLWADPGAQACFGRSSEYHLEDNAAYYLNDLERIAAPDYIPTVEDILRSRDMTTGIVENKFTFKELTFKMVDVGGQRSERKKWIHCFEGVTAIIFCVELSGYDLKLYEDNQTSRMAESLRLFDSICNNNWFINTSLILFLNKKDLLAEKIRRIPLSVCFPEYKGQNTYEEAAVYIQRQFEDLNRNKETKEIYSHFTCATDTSNIQFVFDAVTDVIIQNNLKYIGLC.

Over residues 1 to 14 (MGCRQSSEEKEAAR) the composition is skewed to basic and acidic residues. Residues 1–26 (MGCRQSSEEKEAARRSRRIDRHLRSE) are disordered. G2 is lipidated: N-myristoyl glycine. A lipid anchor (S-palmitoyl cysteine) is attached at C3. Positions 32–355 (REIKLLLLGT…QNNLKYIGLC (324 aa)) constitute a G-alpha domain. Residues 35–48 (KLLLLGTSNSGKST) are G1 motif. GTP is bound by residues 40 to 47 (GTSNSGKS), 176 to 182 (LRSRDMT), 201 to 205 (DVGGQ), 270 to 273 (NKKD), and A327. 2 residues coordinate Mg(2+): S47 and T182. Positions 174-182 (DILRSRDMT) are G2 motif. The interval 197 to 206 (FKMVDVGGQR) is G3 motif. The G4 motif stretch occupies residues 266–273 (ILFLNKKD). Residues 325 to 330 (TCATDT) form a G5 motif region.

This sequence belongs to the G-alpha family. G(i/o/t/z) subfamily. In terms of assembly, G-proteins are composed of 3 units; alpha, beta and gamma. The alpha chain contains the guanine nucleotide binding site. Interacts with ADGRB2.

The protein localises to the membrane. Functionally, guanine nucleotide-binding proteins (G proteins) are involved as modulators or transducers in various transmembrane signaling systems. The protein is Guanine nucleotide-binding protein G(z) subunit alpha (Gnaz) of Mus musculus (Mouse).